The sequence spans 638 residues: ATP-dependent rRNA helicase spb4 (638 aa).

Residues 14–42 (WDGVSPSLSEWVLEAVSSMGFTRMTPVQA) carry the Q motif motif. The 205-residue stretch at 45 to 249 (IPLFMAHKDV…RVGLRNPVKV (205 aa)) folds into the Helicase ATP-binding domain. 58–65 (AVTGSGKT) provides a ligand contact to ATP. The DEAD box motif lies at 197–200 (DEAD). Positions 283–437 (ALKHILHSVD…PISFSESEAT (155 aa)) constitute a Helicase C-terminal domain. 2 stretches are compositionally biased toward basic and acidic residues: residues 534-554 (LLQE…RKAT) and 577-615 (QRRQ…EERR). Residues 534 to 638 (LLQESKEGDG…KDEEEFEGFD (105 aa)) are disordered. A coiled-coil region spans residues 566–619 (RNKKQKRREQKQRRQEKNKWEKMTEEERQKIRETEQMVESIRVKNEEERRLRRA).

The protein belongs to the DEAD box helicase family. DDX55/SPB4 subfamily. Component of pre-60S ribosomal complexes.

Its subcellular location is the nucleus. The protein localises to the nucleolus. The catalysed reaction is ATP + H2O = ADP + phosphate + H(+). ATP-binding RNA helicase involved in the biogenesis of 60S ribosomal subunits. Binds 90S pre-ribosomal particles and dissociates from pre-60S ribosomal particles after processing of 27SB pre-rRNA. Required for the normal formation of 18S rRNA through the processing of pre-rRNAs at sites A0, A1 and A2, and the normal formation of 25S and 5.8S rRNAs through the processing of pre-rRNAs at sites C1 and C2. The sequence is that of ATP-dependent rRNA helicase spb4 from Aspergillus oryzae (strain ATCC 42149 / RIB 40) (Yellow koji mold).